A 399-amino-acid polypeptide reads, in one-letter code: V-set and immunoglobulin domain-containing protein 4 (399 aa).

The N-terminal stretch at 1-19 (MGILLGLLLLGHLTVDTYG) is a signal peptide. The Extracellular segment spans residues 20–283 (RPILEVPESV…TSAGPGKSLP (264 aa)). Ig-like domains lie at 21–131 (PILE…DKIT) and 143–226 (PTVT…SDIV). 2 disulfides stabilise this stretch: C41–C113 and C165–C211. The chain crosses the membrane as a helical span at residues 284 to 304 (VFAIILIISLCCMVVFTMAYI). At 305-399 (MLCRKTSQQE…FLATEGKSVC (95 aa)) the chain is on the cytoplasmic side.

In terms of tissue distribution, abundantly expressed in several fetal tissues. In adult tissues, highest expression in lung and placenta. Expressed in resting macrophages.

It is found in the membrane. Phagocytic receptor, strong negative regulator of T-cell proliferation and IL2 production. Potent inhibitor of the alternative complement pathway convertases. In Homo sapiens (Human), this protein is V-set and immunoglobulin domain-containing protein 4 (VSIG4).